The sequence spans 815 residues: Phosphate transporter PHO1-2 (815 aa).

Residues 1-421 (MVKFSREYEA…QQPRNTHMIT (421 aa)) are Cytoplasmic-facing. One can recognise an SPX domain in the interval 2–368 (VKFSREYEAS…EQQRATDLFS (367 aa)). Disordered regions lie at residues 83 to 108 (SAGQ…STDK), 166 to 213 (RGLA…LELQ), and 242 to 266 (AGKK…GGGG). Basic and acidic residues predominate over residues 97 to 108 (PDRGELVRSTDK). A compositionally biased stretch (low complexity) spans 183–201 (PPSSVHGSSGRYLLSGLSS). Over residues 202-213 (PQSMSDGSLELQ) the composition is skewed to polar residues. The span at 243-254 (GKKDGKTKDGSG) shows a compositional bias: basic and acidic residues. A compositionally biased stretch (gly residues) spans 255 to 266 (KGRGGGGGGGGG). A helical transmembrane segment spans residues 422–442 (FLVGLFTGTFVSLFIIYAILA). At 443–458 (HVSGIFTSTGNSAYME) the chain is on the extracellular side. Residues 459–479 (IVYHVFSMFALISLHIFLYGC) traverse the membrane as a helical segment. Residues 480–508 (NLFMWKNTRINHNFIFDFSSNTALTHRDA) lie on the Cytoplasmic side of the membrane. Residues 509–529 (FLMSASIMCTVVAALVINLFL) traverse the membrane as a helical segment. The Extracellular portion of the chain corresponds to 530 to 538 (KNAGVAYAN). A helical membrane pass occupies residues 539-559 (ALPGALLLLSTGVLFCPFDIF). At 560-686 (YRSTRYCFMR…VRFKYAATPT (127 aa)) the chain is on the cytoplasmic side. An EXS domain is found at 624–815 (TSGQQYKHLA…PLPFRELETD (192 aa)). The helical transmembrane segment at 687 to 707 (PFWVWMVIISSSGATIYQLYW) threads the bilayer. Residues 708–734 (DFVKDWGFLNPKSKNRWLRNELILKNK) are Extracellular-facing. The chain crosses the membrane as a helical span at residues 735–751 (SIYYVSMMLNLALRLAW). The Cytoplasmic portion of the chain corresponds to 752-815 (TESVMKIHIG…PLPFRELETD (64 aa)).

It belongs to the SYG1 (TC 2.A.94) family. Specifically expressed in roots.

The protein resides in the cell membrane. Its function is as follows. Involved in the transfer of inorganic phosphate (Pi) from roots to shoots. The sequence is that of Phosphate transporter PHO1-2 (PHO1-2) from Oryza sativa subsp. japonica (Rice).